The primary structure comprises 212 residues: Probable U3 small nucleolar RNA-associated protein 11 (212 aa).

This sequence belongs to the UTP11 family. Component of the ribosomal small subunit (SSU) processome.

Its subcellular location is the nucleus. It is found in the nucleolus. In terms of biological role, involved in nucleolar processing of pre-18S ribosomal RNA. The protein is Probable U3 small nucleolar RNA-associated protein 11 of Plasmodium falciparum (isolate 3D7).